The sequence spans 418 residues: Lysophosphatidic acid phosphatase type 6 (418 aa).

A mitochondrion-targeting transit peptide spans 1 to 25 (MRVWVPVGVLTSLAYCFHQRRVALA). The substrate binding stretch occupies residues 51–161 (RHGARSPLKP…VFIRSTNMFR (111 aa)). His52 acts as the Nucleophile in catalysis. Catalysis depends on Asp327, which acts as the Proton donor.

It belongs to the histidine acid phosphatase family. In terms of assembly, monomer.

It localises to the mitochondrion. The catalysed reaction is a phosphate monoester + H2O = an alcohol + phosphate. It carries out the reaction 1-(9Z-octadecenoyl)-sn-glycero-3-phosphate + H2O = 1-(9Z-octadecenoyl)-sn-glycerol + phosphate. Its function is as follows. Hydrolyzes lysophosphatidic acid (LPA) containing a medium length fatty acid chain to the corresponding monoacylglycerol. Has highest activity with lysophosphatidic acid containing myristate (C14:0), monounsaturated oleate (C18:1) or palmitate (C16:0), and lower activity with C18:0 and C6:0 lysophosphatidic acid. The polypeptide is Lysophosphatidic acid phosphatase type 6 (Acp6) (Mus musculus (Mouse)).